The sequence spans 147 residues: MSQTRDLQGGKAFGLLKAQQEERLDEINKQFLDDPKYSSDEDLLSKLEGFKEKYMEFDLNGNGDIDIMSLKRMLEKLGVPKTHLELKKLIGEVSSGSGETFSYPDFLRMMLGKRSAILKMILMYEEKAREKEKPTGPPAKKAISELP.

Position 2 is an N-acetylserine (Ser-2). Position 11 is an N6-acetyllysine (Lys-11). Ser-39 is modified (phosphoserine). EF-hand domains follow at residues 45 to 80 and 81 to 115; these read SKLEGFKEKYMEFDLNGNGDIDIMSLKRMLEKLGVP and KTHLELKKLIGEVSSGSGETFSYPDFLRMMLGKRS. Residues Asp-58, Asn-60, Asn-62, Asp-64, Thr-100, and Asp-105 each contribute to the Ca(2+) site. The interval 128 to 147 is disordered; the sequence is AREKEKPTGPPAKKAISELP.

As to quaternary structure, homodimer (Potential). Monomer. Interacts with LCP1. In terms of processing, phosphorylated on serine residues.

Its subcellular location is the cytoplasm. The protein localises to the cytoskeleton. The protein resides in the cell projection. It is found in the ruffle membrane. It localises to the phagocytic cup. Functionally, actin-binding protein that enhances membrane ruffling and RAC activation. Enhances the actin-bundling activity of LCP1. Binds calcium. Plays a role in RAC signaling and in phagocytosis. May play a role in macrophage activation and function. Promotes the proliferation of vascular smooth muscle cells and of T-lymphocytes. Enhances lymphocyte migration. Plays a role in vascular inflammation. This chain is Allograft inflammatory factor 1 (AIF1), found in Macaca mulatta (Rhesus macaque).